Here is a 358-residue protein sequence, read N- to C-terminus: Secreted protein RBT4 (358 aa).

The signal sequence occupies residues 1–19 (MKFSQVATTAAIFAGLTTA). Composition is skewed to low complexity over residues 48-63 (VTGG…QSAA), 153-174 (TTEV…VATP), and 189-200 (AATTASGSSSGS). Disordered regions lie at residues 48–98 (VTGG…DGGN) and 144–203 (GFPS…SNDF). The region spanning 216 to 332 (LDAHNKKRAR…NWGLYVVCSY (117 aa)) is the SCP domain.

Belongs to the CRISP family.

The protein localises to the secreted. Its function is as follows. Secreted protein that acts as a virulence factor during infections such as in posttraumatic corneal infections. Acts as an important antigen in patients with systemic candidiasis and plays a role in the protection against phagocyte attack. This Candida albicans (strain SC5314 / ATCC MYA-2876) (Yeast) protein is Secreted protein RBT4 (RBT4).